A 150-amino-acid chain; its full sequence is Large ribosomal subunit protein bL9 (150 aa).

It belongs to the bacterial ribosomal protein bL9 family.

Binds to the 23S rRNA. The chain is Large ribosomal subunit protein bL9 from Desulforudis audaxviator (strain MP104C).